Reading from the N-terminus, the 374-residue chain is Very late expression factor 1 (374 aa).

The Tyr recombinase domain occupies 169 to 349; sequence AIDTILNFID…NFDESSSDEE (181 aa). Active-site residues include Arg210, Lys239, Arg303, and His326. The segment at 328–374 is disordered; that stretch reads SPASTKPYLNKYNFDESSSDEESGGNNRDSSTGSSANSSSLYYQTGD. The active-site O-(3'-phospho-DNA)-tyrosine intermediate is the Tyr335. Positions 357-367 are enriched in low complexity; the sequence is SSTGSSANSSS.

Belongs to the 'phage' integrase family.

In terms of biological role, involved in very late gene activation. In Orgyia pseudotsugata (Douglas-fir tussock moth), this protein is Very late expression factor 1 (VLF-1).